Reading from the N-terminus, the 525-residue chain is MNDTNDVMHVHSESISPKKNDLDIELGESVVEPHLSNNSIAKLDTYELEENEDISDYAYKLAGISNEHPAHPQNWGWWKKAYIVLLSTSLQMYVFWTPNFYPGVQDSVMELWHLSSQVSLLGQSMFVLGVALGPLFLGPLSDLLGRKLVYIGSLIIYVCFCISCALARNYAQLVISMLIMGVVGSTALGNVAGAVADVLGDEDSNWGMYMFIFMCSVASVGSPMGTGVAENPKLTWRWLYWIDVIVGGFFIILFVFTPETLPAIVIQRYEQKRQGLPVSWFPQFSLKKLAKDTYFVFFMAIKIFFSEPIVSSLGIYNGFVNGLLYFFLQAIWPVYFSIYKMSDMAASCTYMAAMPACVILLWFEPLQCWLYKRDKRKHQNRLRPEARFIMTLFYVWGFPIGIFMFAFCSKVHIHYIVSLIGLTIFNIADYHIWQAMLLYVTDAYPNVSASAVAAFELPSNLGAVGFIHLSALMFSRMNVHWATAVVGFASLPLIALIYALYFYGDRIRARSKLASQRVPINTAAH.

S55 bears the Phosphoserine mark. 13 helical membrane-spanning segments follow: residues 81–101 (AYIV…PNFY), 120–140 (LLGQ…LGPL), 147–167 (KLVY…CALA), 173–193 (LVIS…NVAG), 208–228 (MYMF…GTGV), 238–258 (WLYW…VFTP), 295–315 (FVFF…SLGI), 318–338 (GFVN…YFSI), 350–370 (YMAA…QCWL), 388–408 (FIMT…FAFC), 413–433 (IHYI…YHIW), 454–474 (AFEL…ALMF), and 484–504 (AVVG…YFYG).

This sequence belongs to the major facilitator superfamily. CAR1 family.

The protein localises to the membrane. This is an uncharacterized protein from Schizosaccharomyces pombe (strain 972 / ATCC 24843) (Fission yeast).